A 462-amino-acid polypeptide reads, in one-letter code: Zinc finger CCCH domain-containing protein 34 (462 aa).

Positions 1–13 (MERYGRPGEEGSR) are enriched in basic and acidic residues. The disordered stretch occupies residues 1–26 (MERYGRPGEEGSRSDPSLEWTSHGGE). C3H1-type zinc fingers lie at residues 54–82 (RPDEPDCIYYLRTGVCGYGSRCRFNHPRD), 100–128 (RMGHPVCQHFMRTGTCKFGASCKYHHPRQ), and 148–176 (RPGEKECSYYLRTGQCKFGLTCRFNHPVP). Polar residues predominate over residues 288-303 (TGTYQSVPSSNSTSKE). The disordered stretch occupies residues 288–310 (TGTYQSVPSSNSTSKEFPQRPDQ). 2 consecutive C3H1-type zinc fingers follow at residues 307-335 (RPDQPECQYFMRTGDCKFGSSCRYHHPVD) and 353-381 (RPGVAQCTHFAQHGICKFGPACKFDHSMS). Over residues 405–418 (SSSLSGSSAPVSSS) the composition is skewed to low complexity. Positions 405 to 462 (SSSLSGSSAPVSSSNEPTKEAVTPAVSSMVSGLSRPEPAETSGDSASVSGSIEAKTSS) are disordered. The span at 446 to 462 (SGDSASVSGSIEAKTSS) shows a compositional bias: polar residues.

Its subcellular location is the nucleus. The protein is Zinc finger CCCH domain-containing protein 34 of Arabidopsis thaliana (Mouse-ear cress).